A 441-amino-acid chain; its full sequence is GTPase Der (441 aa).

EngA-type G domains lie at 2–164 (HKVA…PADD) and 173–343 (IRIS…DKWQ). Residues 8–15 (GRPNVGKS), 55–59 (DTGGL), 116–119 (NKID), 179–186 (GRPNVGKS), 226–230 (DTAGI), and 288–291 (NKWD) contribute to the GTP site.

It belongs to the TRAFAC class TrmE-Era-EngA-EngB-Septin-like GTPase superfamily. EngA (Der) GTPase family. Associates with the 50S ribosomal subunit.

Its function is as follows. GTPase that plays an essential role in the late steps of ribosome biogenesis. The protein is GTPase Der of Deinococcus deserti (strain DSM 17065 / CIP 109153 / LMG 22923 / VCD115).